We begin with the raw amino-acid sequence, 462 residues long: GTPase Der (462 aa).

EngA-type G domains lie at 3 to 166 (PVIA…TTET) and 175 to 348 (IKIA…HSAI). GTP-binding positions include 9-16 (GRPNVGKS), 56-60 (DTGGI), 118-121 (NKTD), 181-188 (GRPNVGKS), 228-232 (DTAGV), and 293-296 (NKWD). The region spanning 349-433 (QSFSTPKLTR…PLKIEFKGGQ (85 aa)) is the KH-like domain.

It belongs to the TRAFAC class TrmE-Era-EngA-EngB-Septin-like GTPase superfamily. EngA (Der) GTPase family. Associates with the 50S ribosomal subunit.

Its function is as follows. GTPase that plays an essential role in the late steps of ribosome biogenesis. The polypeptide is GTPase Der (Legionella pneumophila (strain Paris)).